We begin with the raw amino-acid sequence, 121 residues long: Amelogenin (121 aa).

The tract at residues 1–121 (LHHQIIPVLS…DLPLEPWPAS (121 aa)) is disordered. 2 stretches are compositionally biased toward polar residues: residues 10-19 (SQHQTPTHAL) and 47-59 (HSVTPTQHHQSNL). Positions 60 to 84 (PQPGQQPFQPQFPQKPTHRPIQPQA) are enriched in low complexity. A compositionally biased stretch (pro residues) spans 85 to 121 (PVHPMPPMPQPQLPPMFPLQPLPPLLPDLPLEPWPAS).

This sequence belongs to the amelogenin family.

It is found in the secreted. The protein resides in the extracellular space. It localises to the extracellular matrix. Functionally, plays a role in the biomineralization of teeth. Seems to regulate the formation of crystallites during the secretory stage of tooth enamel development. Thought to play a major role in the structural organization and mineralization of developing enamel. In Tachyglossus aculeatus aculeatus (Southeast Australian short-beaked echidna), this protein is Amelogenin (AMEL).